A 325-amino-acid polypeptide reads, in one-letter code: Oxygen-independent coproporphyrinogen III oxidase (325 aa).

Residues 1-151 (AFLMTKDAEI…IERLTSQGYR (151 aa)) form the Radical SAM core domain. S-adenosyl-L-methionine-binding residues include Glu13, Gln40, Arg52, Asp77, Ala111, and Ile197.

Belongs to the anaerobic coproporphyrinogen-III oxidase family. Monomer. Requires [4Fe-4S] cluster as cofactor.

The protein resides in the cytoplasm. The enzyme catalyses coproporphyrinogen III + 2 S-adenosyl-L-methionine = protoporphyrinogen IX + 2 5'-deoxyadenosine + 2 L-methionine + 2 CO2. The protein operates within porphyrin-containing compound metabolism; protoporphyrin-IX biosynthesis; protoporphyrinogen-IX from coproporphyrinogen-III (AdoMet route): step 1/1. Involved in the heme and chlorophyll biosynthesis. Catalyzes the anaerobic oxidative decarboxylation of propionate groups of rings A and B of coproporphyrinogen III to yield the vinyl groups in protoporphyrinogen IX. This chain is Oxygen-independent coproporphyrinogen III oxidase (hemN), found in Thermostichus vulcanus (Synechococcus vulcanus).